Reading from the N-terminus, the 247-residue chain is Ubiquinone biosynthesis O-methyltransferase (247 aa).

S-adenosyl-L-methionine is bound by residues arginine 41, glycine 72, aspartate 93, and methionine 136.

Belongs to the methyltransferase superfamily. UbiG/COQ3 family.

It catalyses the reaction a 3-demethylubiquinol + S-adenosyl-L-methionine = a ubiquinol + S-adenosyl-L-homocysteine + H(+). It carries out the reaction a 3-(all-trans-polyprenyl)benzene-1,2-diol + S-adenosyl-L-methionine = a 2-methoxy-6-(all-trans-polyprenyl)phenol + S-adenosyl-L-homocysteine + H(+). It functions in the pathway cofactor biosynthesis; ubiquinone biosynthesis. O-methyltransferase that catalyzes the 2 O-methylation steps in the ubiquinone biosynthetic pathway. This chain is Ubiquinone biosynthesis O-methyltransferase, found in Bartonella quintana (strain Toulouse) (Rochalimaea quintana).